A 217-amino-acid chain; its full sequence is MASQKQMEVVTKGTGFRRRPKTITYTPGTCELLRVMMKESKLTNIQQRHIMDIMKRGDALPLQCSPTSSQRVLPSKQIASPIYLPPILAARPHLRPANMCQANGAYSREQFKPQATRDLEKEKQRLQNIFATGKDMEERKRKAPPARQKAPAPELDRFEELVKEIQERKEFLADMEALGQGKQYRGIILAEISQKLREMEDIDHRRSEELRKGLATT.

It belongs to the UPF0193 (EVG1) family.

The chain is UPF0193 protein EVG1 (C22orf23) from Homo sapiens (Human).